The following is a 98-amino-acid chain: NADH-ubiquinone oxidoreductase chain 4L (98 aa).

3 consecutive transmembrane segments (helical) span residues 2–22 (PSISINIILAFAAALLGMLMF), 28–48 (SSLLCLEGMMLSMFILSTLII), and 61–81 (IMLLVFSACEAAIGLALLVMV).

Belongs to the complex I subunit 4L family. As to quaternary structure, core subunit of respiratory chain NADH dehydrogenase (Complex I) which is composed of 45 different subunits.

The protein localises to the mitochondrion inner membrane. It catalyses the reaction a ubiquinone + NADH + 5 H(+)(in) = a ubiquinol + NAD(+) + 4 H(+)(out). Core subunit of the mitochondrial membrane respiratory chain NADH dehydrogenase (Complex I) which catalyzes electron transfer from NADH through the respiratory chain, using ubiquinone as an electron acceptor. Part of the enzyme membrane arm which is embedded in the lipid bilayer and involved in proton translocation. This Allocebus trichotis (Hairy-eared dwarf lemur) protein is NADH-ubiquinone oxidoreductase chain 4L (MT-ND4L).